Here is a 499-residue protein sequence, read N- to C-terminus: MESSTLLYTFLAVVLLSISLKLFPVSRRRRNLPPSPGLALPVIGHLHLIGKLLHRSLYDLSKKYGSVFSLQLGNRLVLVVSSPAAAEECFTKNDIVFANRPLFILGKYIGYNYTTMVGSPYGEHWRNLRRLAAVEIFSAGSLNRFLSIREDEVKQLLLSLYQSSGQDFGKVEMKSKLSELSFNVTMRMVAGKRYFGQDVDSDEAKLFRALIGEVFEHAGASNPGDFVPFLRWIDFKNYEKKVSKISQEMDAFLQRLIHESRINKNNVTMIDHLLSLQESQPEYYTDQIIKGIIMVLLLAGTDTSAVTVEWAMSLLLNHPETLEKARTEIETQVGSNRLIEEQDLPKLTYLHNIISETFRLCPAAPMLVPHESSDDCKVQGYDVPKGTILLVNAWAIHRDPEFWDEPTLFKPERHGGVELEPSKLMPFGMGRRSCPGSGLAQRVVGLTLGALIQCFEWKRIGEAKIDMAEGSGLTMPKAQPLEALCKPRNILHKVVSETS.

The helical transmembrane segment at 5–25 threads the bilayer; sequence TLLYTFLAVVLLSISLKLFPV. Asn-112, Asn-183, and Asn-266 each carry an N-linked (GlcNAc...) asparagine glycan. Residue Cys-434 coordinates heme.

This sequence belongs to the cytochrome P450 family. Expressed in leaf epidermis and in the leaf internal phloem-associated parenchyma (IPAP) inside the mesophyll.

The protein localises to the membrane. In Catharanthus roseus (Madagascar periwinkle), this protein is Cytochrome P450 81Q32.